The chain runs to 379 residues: Succinyl-diaminopimelate desuccinylase (379 aa).

H70 is a binding site for Zn(2+). Residue D72 is part of the active site. D103 is a binding site for Zn(2+). The active-site Proton acceptor is the E137. Zn(2+)-binding residues include E138, E166, and H352.

Belongs to the peptidase M20A family. DapE subfamily. In terms of assembly, homodimer. Zn(2+) serves as cofactor. Requires Co(2+) as cofactor.

The catalysed reaction is N-succinyl-(2S,6S)-2,6-diaminopimelate + H2O = (2S,6S)-2,6-diaminopimelate + succinate. It participates in amino-acid biosynthesis; L-lysine biosynthesis via DAP pathway; LL-2,6-diaminopimelate from (S)-tetrahydrodipicolinate (succinylase route): step 3/3. Its function is as follows. Catalyzes the hydrolysis of N-succinyl-L,L-diaminopimelic acid (SDAP), forming succinate and LL-2,6-diaminopimelate (DAP), an intermediate involved in the bacterial biosynthesis of lysine and meso-diaminopimelic acid, an essential component of bacterial cell walls. This is Succinyl-diaminopimelate desuccinylase from Burkholderia orbicola (strain MC0-3).